Consider the following 288-residue polypeptide: Diaminopimelate epimerase (288 aa).

The substrate site is built by Asn-17, Gln-47, and Asn-67. Cys-76 (proton donor) is an active-site residue. Substrate is bound by residues 77 to 78 (GN), Asn-164, Asn-197, and 215 to 216 (ER). The active-site Proton acceptor is Cys-224. 225-226 (GS) serves as a coordination point for substrate.

Belongs to the diaminopimelate epimerase family. In terms of assembly, homodimer.

The protein localises to the cytoplasm. The enzyme catalyses (2S,6S)-2,6-diaminopimelate = meso-2,6-diaminopimelate. It functions in the pathway amino-acid biosynthesis; L-lysine biosynthesis via DAP pathway; DL-2,6-diaminopimelate from LL-2,6-diaminopimelate: step 1/1. Functionally, catalyzes the stereoinversion of LL-2,6-diaminopimelate (L,L-DAP) to meso-diaminopimelate (meso-DAP), a precursor of L-lysine and an essential component of the bacterial peptidoglycan. This Rhodopseudomonas palustris (strain BisA53) protein is Diaminopimelate epimerase.